The chain runs to 293 residues: Ribosomal protein L11 methyltransferase (293 aa).

S-adenosyl-L-methionine contacts are provided by T145, G166, D188, and N230.

This sequence belongs to the methyltransferase superfamily. PrmA family.

The protein resides in the cytoplasm. It carries out the reaction L-lysyl-[protein] + 3 S-adenosyl-L-methionine = N(6),N(6),N(6)-trimethyl-L-lysyl-[protein] + 3 S-adenosyl-L-homocysteine + 3 H(+). Functionally, methylates ribosomal protein L11. In Shewanella frigidimarina (strain NCIMB 400), this protein is Ribosomal protein L11 methyltransferase.